The sequence spans 465 residues: Sushi repeat-containing protein SRPX2 (465 aa).

A signal peptide spans 1–23 (MASQLTQRGALFLLFFLTPAVTP). Sushi domains lie at 69–119 (ATCY…YCRQ), 120–178 (MRCH…VCVD), and 262–321 (RRCP…ICAP). Intrachain disulfides connect C71/C105, C91/C117, C122/C163, and C149/C176. Positions 177 to 261 (VDIDPPKIRC…SCKFIVKVQV (85 aa)) constitute an HYR domain. 2 cysteine pairs are disulfide-bonded: C264–C306 and C292–C319.

In terms of assembly, forms homooligomers. Interacts with PLAUR (via the UPAR/Ly6 domains), ADAMTS4 and CTSB. Interacts with HGF; the interaction increases the mitogenic activity of HGF. Contains chondroitin sulfate chains. Expressed in neurons of the rolandic area of the brain (at protein level). Highly expressed in the brain, placenta, lung, trachea, uterus, adrenal gland, heart, ovary and placenta. Weakly expressed in the peripheral blood, brain and bone marrow. Expressed in numerous cancer cell lines and in gastrointestinal cancer cells. Higher levels found in colorectal cancers than in normal colonic mucosa.

It localises to the secreted. It is found in the cytoplasm. The protein resides in the cell surface. Its subcellular location is the synapse. Its function is as follows. Acts as a ligand for the urokinase plasminogen activator surface receptor. Plays a role in angiogenesis by inducing endothelial cell migration and the formation of vascular network (cords). Involved in cellular migration and adhesion. Increases the phosphorylation levels of FAK. Interacts with and increases the mitogenic activity of HGF. Promotes synapse formation. May have a role in the perisylvian region, critical for language and cognitive development. This is Sushi repeat-containing protein SRPX2 (SRPX2) from Homo sapiens (Human).